The primary structure comprises 417 residues: MFPRDARLDMYDPELAKAIAAEVRRQEDHVELIASENYCSTLVMQVQGSQLTNKYAEGYSGKRYYGGCEYVDIAEQLAIERAKKLFGADYANVQPHSGSQANQAVYFALLQPGDTILGMSLAHGGHLTHGANVNVSGKLFNAVQYGVNAQGLIDYEAVESLALEHRPKMVVAGFSAYSQKIDWARFRAIADQVGAYLLVDMAHVAGLVAAGVYPSPLPHAHVVTSTTHKTLRGPRGGIIVAQAPQEALVKKLQSIVFPGIQGGPLMHVIAAKAVAFKEALEPAFKVYQQQVVKNAKAMAGTLMLRGYKIVSGGTENHLMLVDMIGRDVSGKDAEGALGQVHITVNKNAVPDDPRSPFVTSGLRLGTPAVTTRGYQEQDCVDLAHWIADVLDAPADVTVIAAVREKVAAQCKKYPVYR.

Residues L121 and 125-127 (GHL) each bind (6S)-5,6,7,8-tetrahydrofolate. K229 bears the N6-(pyridoxal phosphate)lysine mark. 355–357 (SPF) is a binding site for (6S)-5,6,7,8-tetrahydrofolate.

Belongs to the SHMT family. In terms of assembly, homodimer. The cofactor is pyridoxal 5'-phosphate.

The protein resides in the cytoplasm. The enzyme catalyses (6R)-5,10-methylene-5,6,7,8-tetrahydrofolate + glycine + H2O = (6S)-5,6,7,8-tetrahydrofolate + L-serine. Its pathway is one-carbon metabolism; tetrahydrofolate interconversion. The protein operates within amino-acid biosynthesis; glycine biosynthesis; glycine from L-serine: step 1/1. In terms of biological role, catalyzes the reversible interconversion of serine and glycine with tetrahydrofolate (THF) serving as the one-carbon carrier. This reaction serves as the major source of one-carbon groups required for the biosynthesis of purines, thymidylate, methionine, and other important biomolecules. Also exhibits THF-independent aldolase activity toward beta-hydroxyamino acids, producing glycine and aldehydes, via a retro-aldol mechanism. This is Serine hydroxymethyltransferase from Xylella fastidiosa (strain M23).